Here is a 149-residue protein sequence, read N- to C-terminus: Transcriptional regulator MraZ (149 aa).

SpoVT-AbrB domains follow at residues 7 to 54 (KYVN…GISH) and 83 to 126 (AVQL…QPQN).

It belongs to the MraZ family. Forms oligomers.

The protein resides in the cytoplasm. Its subcellular location is the nucleoid. The polypeptide is Transcriptional regulator MraZ (Rickettsia conorii (strain ATCC VR-613 / Malish 7)).